The following is a 173-amino-acid chain: Crossover junction endodeoxyribonuclease RuvC (173 aa).

Catalysis depends on residues Asp-8, Glu-67, and Asp-139. Residues Asp-8, Glu-67, and Asp-139 each coordinate Mg(2+).

It belongs to the RuvC family. In terms of assembly, homodimer which binds Holliday junction (HJ) DNA. The HJ becomes 2-fold symmetrical on binding to RuvC with unstacked arms; it has a different conformation from HJ DNA in complex with RuvA. In the full resolvosome a probable DNA-RuvA(4)-RuvB(12)-RuvC(2) complex forms which resolves the HJ. The cofactor is Mg(2+).

It is found in the cytoplasm. The enzyme catalyses Endonucleolytic cleavage at a junction such as a reciprocal single-stranded crossover between two homologous DNA duplexes (Holliday junction).. Functionally, the RuvA-RuvB-RuvC complex processes Holliday junction (HJ) DNA during genetic recombination and DNA repair. Endonuclease that resolves HJ intermediates. Cleaves cruciform DNA by making single-stranded nicks across the HJ at symmetrical positions within the homologous arms, yielding a 5'-phosphate and a 3'-hydroxyl group; requires a central core of homology in the junction. The consensus cleavage sequence is 5'-(A/T)TT(C/G)-3'. Cleavage occurs on the 3'-side of the TT dinucleotide at the point of strand exchange. HJ branch migration catalyzed by RuvA-RuvB allows RuvC to scan DNA until it finds its consensus sequence, where it cleaves and resolves the cruciform DNA. The protein is Crossover junction endodeoxyribonuclease RuvC of Shewanella sp. (strain ANA-3).